Consider the following 369-residue polypeptide: MPPMLWLLLHFAAPALGFYFSISCPSGKQCQQALLSGNDILLYCNSSGAHWYYLFTQGKKGRLTSLTNISNMEIMPEGSLLIKDPLPSQTGLYHCWNKNGRQVVQYEIDFQDVTTLHITHKDLGQRPLQNETLHLGSKQLIFTWWEPWQDCNRCEEPGECKRLGYRYIEEPLEEAMPCWLYLGEVLVWSSRLRPELQVEACHVQCTNNTQLRVDYVIFDNFRLDEKTEFVWLDCPLGSMYRPVNWRANDTPLTWESQLSGQDFTTFLDPSTGGRQLQVFQPAVYKCFVQQELVAQFKPAASLETLEAQWRENDAQWREARKALRGRADSVLKGLKLVLLVVTVLALLGALLKCIHPSPGRRSTQVLVVK.

A signal peptide spans 1–17 (MPPMLWLLLHFAAPALG). The Extracellular segment spans residues 18 to 335 (FYFSISCPSG…RADSVLKGLK (318 aa)). N-linked (GlcNAc...) asparagine glycans are attached at residues Asn45, Asn68, and Asn130. The helical transmembrane segment at 336 to 356 (LVLLVVTVLALLGALLKCIHP) threads the bilayer. The Cytoplasmic portion of the chain corresponds to 357 to 369 (SPGRRSTQVLVVK).

This sequence belongs to the FAM187 family.

It is found in the membrane. The protein is Protein FAM187B (FAM187B) of Homo sapiens (Human).